Consider the following 635-residue polypeptide: Ankyrin repeat and SOCS box protein 2 (635 aa).

A required for FLNA degradation region spans residues 8–16 (RGSQCTIGQ). Residues 26–45 (SEDELVQMAIEQSLADKTRG) form the UIM domain. 12 ANK repeats span residues 104-133 (APAD…NLAE), 137-167 (EGWL…TIDQ), 171-200 (QEET…EPDI), 204-233 (SRET…DTNH), 237-266 (RGWT…KVES), 270-299 (YGIT…DINT), 303-332 (DNAS…DANK), 336-365 (DGLL…RTRI), 368-397 (SGVS…DVNT), 410-439 (RRSS…DPNR), 440-469 (DVIS…NIDA), and 476-504 (TAFP…DGEP). Residue S371 is modified to Phosphoserine; by MAPK. The SOCS box domain occupies 586-635 (IKEKAEPPRPLAHLCRLRVRKAIGKYRIKLLDTLPLPGRLIRYLKYENTQ).

Belongs to the ankyrin SOCS box (ASB) family. As to quaternary structure, component of a probable ECS E3 ubiquitin-protein ligase complex which contains CUL5, either RBX1 or RNF7/RBX2, Elongin BC complex (ELOB and ELOC) and ASB2. Interacts with SKP2. Through its interaction with SKP2, likely to bridge the formation of dimeric E3-ubiquitin-protein ligase complexes composed of an ECS complex and an SCF(SKP2) complex. Interacts with JAK2; the interaction targets JAK2 for Notch-mediated proteasomal degradation. Interacts with TCF3/E2A; the interaction is mediated by SKP2 and targets TCF3 for Notch-mediated proteasomal degradation. In terms of assembly, interacts with DES. Post-translationally, monoubiquitinated. Not monoubiquitinated. In terms of processing, phosphorylation at Ser-371 is required for association with FLNA and subsequent FLNA degradation. In terms of tissue distribution, expressed in muscle cells. Expressed in hematopoietic cells.

The protein localises to the cytoplasm. It is found in the cytoskeleton. The protein resides in the stress fiber. It localises to the myofibril. Its subcellular location is the sarcomere. The protein localises to the z line. The protein operates within protein modification; protein ubiquitination. Its function is as follows. Substrate-recognition component of a SCF-like ECS (Elongin-Cullin-SOCS-box protein) E3 ubiquitin-protein ligase complex which mediates the ubiquitination and subsequent proteasomal degradation of target proteins. Mediates Notch-induced ubiquitination and degradation of substrates including TCF3/E2A and JAK2. Required during embryonic heart development for complete heart looping. Required for cardiomyocyte differentiation. Specifically promotes the ubiquitination of SMAD9 and targets it for proteasomal degradation, leading to avoid excessive accumulation of SMAD9. Plays a role in the regulation of NK-cell migration by modulating protein levels of filamin A/FLNA via regulation of its ubiquitination and proteasome degradation. Involved in myogenic differentiation and targets filamin FLNB for proteasomal degradation but not filamin FLNA. Also targets DES for proteasomal degradation. Acts as a negative regulator of skeletal muscle mass. In terms of biological role, targets filamins FLNA and FLNB for proteasomal degradation. This leads to enhanced adhesion of hematopoietic cells to fibronectin. Required for FLNA degradation in immature cardiomyocytes which is necessary for actin cytoskeleton remodeling, leading to proper organization of myofibrils and function of mature cardiomyocytes. Required for degradation of FLNA and FLNB in immature dendritic cells (DC) which enhances immature DC migration by promoting DC podosome formation and DC-mediated degradation of the extracellular matrix. Does not promote proteasomal degradation of tyrosine-protein kinases JAK1 or JAK2 in hematopoietic cells. The sequence is that of Ankyrin repeat and SOCS box protein 2 (ASB2) from Homo sapiens (Human).